We begin with the raw amino-acid sequence, 599 residues long: MSDLSHIRNFSIIAHIDHGKSTLADRFIQMCGGLSEREMAAQVLDSMDLERERGITIKAHSVTLHYKARDGKTYQLNFIDTPGHVDFTYEVSRSLAACEGALLVVDAGQGVEAQSVANCYTAIEQGLEVMPVLNKMDLPQAEPERVKEEIEHIIGIDATDAVACSAKSGMGVDEVLERLVAVIPPPTGDIEAPLQALIIDSWFDNYLGVVSLVRVRHGRIKKGDKVLVKSTGKVHQVDSVGVFTPKHSATADLKAGEVGFIIAGIKDIHGAPVGDTLTLSSTPDVEMLPGFQRIKPQVYAGLFPVSSDDFEDFREALQKLTLNDAALQYEPESSEALGFGFRIGFLGMLHMEIIQERLEREYDLDLITTAPTVVYELLLKNGDTIYVDNPSRLPDLSFIEDMREPIVQANILVPQDHLGNVITLCIEKRGVQRDMQFLGSQVQVRYDLPMSEVVLDFFDRLKSVSRGYASLDYSFVRFQSANLVKLDVLINGEKVDALALIVHRDNAHYKGRQLTEKMKELIPRQMFDVAIQAAIGGQIVARTTVKALRKNVLAKCYGGDVSRKRKLLEKQKAGKKRMKQVGSVEIPQEAFLAVLKVDS.

Residues 5 to 187 (SHIRNFSIIA…RLVAVIPPPT (183 aa)) form the tr-type G domain. GTP-binding positions include 17-22 (DHGKST) and 134-137 (NKMD).

This sequence belongs to the TRAFAC class translation factor GTPase superfamily. Classic translation factor GTPase family. LepA subfamily.

It localises to the cell inner membrane. It catalyses the reaction GTP + H2O = GDP + phosphate + H(+). Its function is as follows. Required for accurate and efficient protein synthesis under certain stress conditions. May act as a fidelity factor of the translation reaction, by catalyzing a one-codon backward translocation of tRNAs on improperly translocated ribosomes. Back-translocation proceeds from a post-translocation (POST) complex to a pre-translocation (PRE) complex, thus giving elongation factor G a second chance to translocate the tRNAs correctly. Binds to ribosomes in a GTP-dependent manner. This chain is Elongation factor 4, found in Stutzerimonas stutzeri (strain A1501) (Pseudomonas stutzeri).